The chain runs to 106 residues: MNKIRKGDEVIVIAGRDKGKRGTVSLRKDDSHVLVDGINLVKKHTKPNPLKGTTGGIVEKSMPIHQSNVAIFNAATGKADRVGIKLLADGKKVRVFKSSGDEIKAA.

The protein belongs to the universal ribosomal protein uL24 family. As to quaternary structure, part of the 50S ribosomal subunit.

Functionally, one of two assembly initiator proteins, it binds directly to the 5'-end of the 23S rRNA, where it nucleates assembly of the 50S subunit. In terms of biological role, one of the proteins that surrounds the polypeptide exit tunnel on the outside of the subunit. The chain is Large ribosomal subunit protein uL24 from Polaromonas sp. (strain JS666 / ATCC BAA-500).